Here is a 316-residue protein sequence, read N- to C-terminus: MPIPFYPHRSVLLEEVIEAFQPVQLKVFIDGTLGAGGHAEAILEHHPEIELYLGIDQDPNALNIANKRLEKWKQKILLKQGNFSQFDIFLKEIGFSSMDGLLVDLGVSSMQLDQPERGFSFSKDGPLDMRMNPEGKLTAADIVNTWSEHDLGKIFRDYGEEKKWRLAARTIVQARQVKQILTTTDLANLLKPAFAWNPKKGINPLTLIFQALRICVNRELDVLEQLVSKTFDYLKPGGRVAVISFHSLEDRIVKNELRLAASDKWETTGLGSGLFRDKKPVAKLVNRKPICPHEKEIKENPRSRSAKFRIAEKLEG.

Residues glycine 36–histidine 38, aspartate 56, phenylalanine 83, aspartate 104, and glutamine 111 each bind S-adenosyl-L-methionine.

This sequence belongs to the methyltransferase superfamily. RsmH family.

The protein localises to the cytoplasm. The enzyme catalyses cytidine(1402) in 16S rRNA + S-adenosyl-L-methionine = N(4)-methylcytidine(1402) in 16S rRNA + S-adenosyl-L-homocysteine + H(+). Specifically methylates the N4 position of cytidine in position 1402 (C1402) of 16S rRNA. The sequence is that of Ribosomal RNA small subunit methyltransferase H from Protochlamydia amoebophila (strain UWE25).